The following is a 295-amino-acid chain: Protein FAM110A (295 aa).

Disordered stretches follow at residues Pro-117–Ile-148 and Pro-160–Leu-191. Composition is skewed to pro residues over residues Leu-138–Ser-147 and Pro-160–Gly-171.

It belongs to the FAM110 family. In terms of assembly, may interact with CSPP1.

Its subcellular location is the cytoplasm. The protein localises to the cytoskeleton. The protein resides in the microtubule organizing center. It localises to the centrosome. It is found in the spindle pole. The sequence is that of Protein FAM110A (FAM110A) from Bos taurus (Bovine).